We begin with the raw amino-acid sequence, 100 residues long: Probable steroid-binding protein 3 (100 aa).

Position 1 is an N-acetylmethionine (methionine 1). The 82-residue stretch at methionine 1–asparagine 82 folds into the Cytochrome b5 heme-binding domain. The tract at residues methionine 1 to asparagine 82 is sterol-binding.

Belongs to the cytochrome b5 family. MAPR subfamily.

Its subcellular location is the nucleus. This chain is Probable steroid-binding protein 3 (MP3), found in Arabidopsis thaliana (Mouse-ear cress).